Here is a 55-residue protein sequence, read N- to C-terminus: Caltrin-like protein 2 (55 aa).

In terms of domain architecture, WAP spans 7–55 (AINRPGSCPRVMIYCPARHPPNKCTSDYDCPKPQKCCPGYCGKQCYQPE).

Glycosylated.

Inhibits calcium transport into spermatozoa. The protein is Caltrin-like protein 2 of Cavia porcellus (Guinea pig).